Here is a 353-residue protein sequence, read N- to C-terminus: Sphingosine 1-phosphate receptor 2 (353 aa).

Topologically, residues 1-34 are extracellular; that stretch reads MGSLYSEYLNPNKVQEHYNYTKETLETQETTSRQ. Residue Asn-19 is glycosylated (N-linked (GlcNAc...) asparagine). The chain crosses the membrane as a helical span at residues 35-59; that stretch reads VASAFIVILCCAIVVENLLVLIAVA. At 60-66 the chain is on the cytoplasmic side; it reads RNSKFHS. The helical transmembrane segment at 67 to 95 threads the bilayer; that stretch reads AMYLFLGNLAASDLLAGVAFVANTLLSGS. Residues 96-109 lie on the Extracellular side of the membrane; the sequence is VTLRLTPVQWFARE. A helical membrane pass occupies residues 110 to 128; the sequence is GSAFITLSASVFSLLAIAI. At 129–147 the chain is on the cytoplasmic side; it reads ERHVAIAKVKLYGSDKSCR. The helical transmembrane segment at 148–173 threads the bilayer; that stretch reads MLLLIGASWLISLVLGGLPILGWNCL. The Extracellular portion of the chain corresponds to 174–189; it reads GHLEACSTVLPLYAKH. The helical transmembrane segment at 190 to 210 threads the bilayer; that stretch reads YVLCVVTIFSIILLAIVALYV. Residues 211-233 are Cytoplasmic-facing; sequence RIYCVVRSSHADMAAPQTLALLK. The helical transmembrane segment at 234-255 threads the bilayer; that stretch reads TVTIVLGVFIVCWLPAFSILLL. Residues 256 to 271 lie on the Extracellular side of the membrane; that stretch reads DYACPVHSCPILYKAH. A helical membrane pass occupies residues 272-292; that stretch reads YFFAVSTLNSLLNPVIYTWRS. Over 293-353 the chain is Cytoplasmic; it reads RDLRREVLRP…PTFLEGNTVV (61 aa). Cys-305 is lipidated: S-palmitoyl cysteine.

The protein belongs to the G-protein coupled receptor 1 family.

It is found in the cell membrane. Receptor for the lysosphingolipid sphingosine 1-phosphate (S1P). S1P is a bioactive lysophospholipid that elicits diverse physiological effects on most types of cells and tissues. When expressed in rat HTC4 hepatoma cells, is capable of mediating S1P-induced cell proliferation and suppression of apoptosis. Receptor for the chemokine-like protein FAM19A5. Mediates the inhibitory effect of FAM19A5 on vascular smooth muscle cell proliferation and migration. In lymphoid follicles, couples the binding of S1P to the activation of GNA13 and downstream inhibition of AKT activation leading to suppression of germinal center (GC) B cell growth and migration outside the GC niche. This chain is Sphingosine 1-phosphate receptor 2 (S1PR2), found in Homo sapiens (Human).